A 368-amino-acid chain; its full sequence is Glutaminyl-peptide cyclotransferase (368 aa).

The signal sequence occupies residues 1 to 23 (MAGERRDSKAAAFFCLAWALCLA). Asn-53 carries N-linked (GlcNAc...) asparagine glycosylation. Residues Cys-143 and Cys-169 are joined by a disulfide bond. Asp-164 is a Zn(2+) binding site. Glu-207 serves as the catalytic Proton acceptor. Glu-208 is a Zn(2+) binding site. Catalysis depends on Asp-254, which acts as the Proton acceptor. The N-linked (GlcNAc...) asparagine glycan is linked to Asn-292. His-336 lines the Zn(2+) pocket. An N-linked (GlcNAc...) asparagine glycan is attached at Asn-352.

It belongs to the glutaminyl-peptide cyclotransferase family. Expressed by the venom gland.

The protein resides in the secreted. It catalyses the reaction N-terminal L-glutaminyl-[peptide] = N-terminal 5-oxo-L-prolyl-[peptide] + NH4(+). In terms of biological role, responsible for the biosynthesis of pyroglutamyl peptides. Has a bias against acidic and tryptophan residues adjacent to the N-terminal glutaminyl residue and a lack of importance of chain length after the second residue. Also catalyzes N-terminal pyroglutamate formation. This is Glutaminyl-peptide cyclotransferase (QPCT) from Boiga irregularis (Brown tree snake).